Reading from the N-terminus, the 128-residue chain is Secreted RxLR effector protein RXLR-C09 (128 aa).

A signal peptide spans 1–22 (MRFCLVFIRLAAFVILSGGATS). The short motif at 58–75 (RLLRLNDQADISGHDEER) is the RxLR-dEER element.

It belongs to the RxLR effector family.

It localises to the secreted. It is found in the host cell membrane. The protein resides in the host nucleus. Functionally, secreted effector that suppresses pattern-triggered immunity (PTI) in plant host. This chain is Secreted RxLR effector protein RXLR-C09, found in Plasmopara halstedii (Downy mildew of sunflower).